Here is a 561-residue protein sequence, read N- to C-terminus: Arginine--tRNA ligase (561 aa).

A 'HIGH' region motif is present at residues 129 to 139 (ANPTGPLHVGH).

Belongs to the class-I aminoacyl-tRNA synthetase family. In terms of assembly, monomer.

The protein localises to the cytoplasm. It carries out the reaction tRNA(Arg) + L-arginine + ATP = L-arginyl-tRNA(Arg) + AMP + diphosphate. This chain is Arginine--tRNA ligase, found in Bordetella parapertussis (strain 12822 / ATCC BAA-587 / NCTC 13253).